A 202-amino-acid polypeptide reads, in one-letter code: Energy-coupling factor transporter transmembrane protein BioN (202 aa).

3 helical membrane passes run 21–40 (LLSLTAFAILLFISHNLLLL), 44–63 (VLVAAVLYGTVGLPIGEALL), and 68–90 (IFLTIAVVALFNLIFNPWQAALV).

The protein belongs to the CbiQ family. Part of a biotin transporter complex composed of BioM, BioN and BioY.

The protein localises to the cell inner membrane. Functionally, involved in biotin uptake. The sequence is that of Energy-coupling factor transporter transmembrane protein BioN (bioN) from Rhizobium etli (strain ATCC 51251 / DSM 11541 / JCM 21823 / NBRC 15573 / CFN 42).